The primary structure comprises 419 residues: MKVSNLKITNVKTILTAPGGIDLAVVKIETNEPGLYGLGCATFTQRIFAVKSAIDEYMAPFLVGKDPTRIEDIWQSGVVSGYWRNGPIMNNALSGVDMALWDIKGKLAGMPVYDLLGGKCRDGIPLYCHTDGGDEVEVEDNIRARMEEGYQYVRCQMGMYGGAGTDDLKLIATQLARAKNIQPKRSPRSKTPGIYFDPDAYAKSVPRLFDHLRNKLGFGIEFIHDVHERVTPVTAINLAKTLEQYQLFYLEDPVAPENIDWLKMLRQQSSTPISMGELFVNVNEWKPLIDNRLIDYIRCHVSTIGGITPARKLAVYSELNGVRTAWHGPGDISPVGVCANMHLDLSSPNFGIQEYTPMNDALRDVFPGCPEIDHGYAYLNDKPGLGIDIDEAKAAKYPCEGGIPSWTMARTPDGTASRP.

Substrate is bound by residues Gln45 and His129. The active-site Proton donor/acceptor is the Tyr160. Asp225 is a Mg(2+) binding site. Catalysis depends on His227, which acts as the Proton donor/acceptor. 2 residues coordinate Mg(2+): Glu251 and Glu277. Residues Glu277, Arg298, His327, Asp331, and Glu354 each contribute to the substrate site.

It belongs to the mandelate racemase/muconate lactonizing enzyme family. GalD subfamily. Homotetramer. Mg(2+) serves as cofactor.

The catalysed reaction is D-gluconate = 2-dehydro-3-deoxy-D-gluconate + H2O. In terms of biological role, has low D-gluconate dehydratase activity (in vitro), suggesting that it has no significant role in D-gluconate degradation in vivo. Has no detectable activity with a panel of 70 other acid sugars (in vitro). This is D-galactonate dehydratase family member SEN1436 from Salmonella enteritidis PT4 (strain P125109).